Here is a 534-residue protein sequence, read N- to C-terminus: UDP-glucuronosyltransferase 1A3 (534 aa).

The first 28 residues, 1–28 (MATGLQVPLPWLATGLLLLLSVQPWAES), serve as a signal peptide directing secretion. Residues Asn119, Asn142, Asn296, and Asn348 are each glycosylated (N-linked (GlcNAc...) asparagine). Residues 492–508 (VIGFLLAVVLTVAFITF) form a helical membrane-spanning segment.

This sequence belongs to the UDP-glycosyltransferase family. In terms of assembly, homodimer. Homooligomer. Interacts with UGT1A1, UGT1A4, UGT1A6, UGT1A7, UGT1A8, UGT1A9 and UGT1A10 to form heterodimers. Isoform 1 interacts with isoform 2/i2 suggesting that oligomerization is involved in negative regulation of transferase activity by isoform 2. Isoform 1 also interacts with respective i2 isoforms of UGT1A1, UGT1A4, UGT1A6, UGT1A7, UGT1A8, UGT1A9 and UGT1A10. In terms of tissue distribution, expressed in liver, kidney, colon, esophagus and small intestine. Expressed in liver, kidney and colon. Not expressed in esophagus and small intestine.

It is found in the endoplasmic reticulum membrane. It catalyses the reaction glucuronate acceptor + UDP-alpha-D-glucuronate = acceptor beta-D-glucuronoside + UDP + H(+). The enzyme catalyses 17beta-estradiol + UDP-alpha-D-glucuronate = 17beta-estradiol 3-O-(beta-D-glucuronate) + UDP + H(+). It carries out the reaction 17beta-estradiol + UDP-alpha-D-glucuronate = 17beta-estradiol 17-O-(beta-D-glucuronate) + UDP + H(+). The catalysed reaction is 17alpha-estradiol + UDP-alpha-D-glucuronate = 17alpha-estradiol 3-O-(beta-D-glucuronate) + UDP + H(+). It catalyses the reaction estrone + UDP-alpha-D-glucuronate = estrone 3-O-(beta-D-glucuronate) + UDP + H(+). The enzyme catalyses chenodeoxycholate + UDP-alpha-D-glucuronate = chenodeoxycholoyl-24-O-(beta-D-glucuronate) + UDP. It carries out the reaction deoxycholate + UDP-alpha-D-glucuronate = deoxycholoyl-24-O-(beta-D-glucuronate) + UDP. The catalysed reaction is lithocholate + UDP-alpha-D-glucuronate = lithocholoyl-24-O-(beta-D-glucuronate) + UDP. It catalyses the reaction hyodeoxycholate + UDP-alpha-D-glucuronate = hyodeoxycholoyl-24-O-(beta-D-glucuronate) + UDP. The enzyme catalyses hyocholate + UDP-alpha-D-glucuronate = hyocholoyl-24-O-(beta-D-glucuronate) + UDP. It carries out the reaction calcidiol + UDP-alpha-D-glucuronate = calcidiol 25-O-(beta-D-glucuronide) + UDP + H(+). The catalysed reaction is (E)-ferulate + UDP-alpha-D-glucuronate = (E)-4-O-(beta-D-glucuronosyl)-ferulate + UDP + H(+). It catalyses the reaction (E)-ferulate + UDP-alpha-D-glucuronate = (E)-ferulic acid beta-D-glucuronate ester + UDP. The enzyme catalyses losartan + UDP-alpha-D-glucuronate = losartan-2-N-beta-D-glucuronide + UDP. It carries out the reaction candesartan + UDP-alpha-D-glucuronate = candesartan-2-N-beta-D-glucuronide + UDP. The catalysed reaction is zolasartan + UDP-alpha-D-glucuronate = zolarsartan-2-N-beta-D-glucuronide + UDP. Its function is as follows. UDP-glucuronosyltransferase (UGT) that catalyzes phase II biotransformation reactions in which lipophilic substrates are conjugated with glucuronic acid to increase the metabolite's water solubility, thereby facilitating excretion into either the urine or bile. Essential for the elimination and detoxification of drugs, xenobiotics and endogenous compounds. Catalyzes the glucuronidation of endogenous estrogen hormones such as estradiol and estrone. Contributes to bile acid (BA) detoxification by catalyzing the glucuronidation of BA substrates, which are natural detergents for dietary lipids absorption. Involved in the glucuronidation of calcidiol, which is the major circulating form of vitamin D3, essential for the regulation of calcium and phosphate homeostasis. Involved in the glucuronidation of the phytochemical ferulic acid at the phenolic or the carboxylic acid group. Involved in the glucuronidation of the AGTR1 angiotensin receptor antagonists losartan, candesartan and zolarsartan, which can inhibit the effect of angiotensin II. Functionally, lacks UDP-glucuronosyltransferase (UGT) activity but acts as a negative regulator of isoform 1. The chain is UDP-glucuronosyltransferase 1A3 from Homo sapiens (Human).